A 650-amino-acid chain; its full sequence is Chaperone protein DnaK (650 aa).

Position 200 is a phosphothreonine; by autocatalysis (threonine 200). A compositionally biased stretch (low complexity) spans 613-634; it reads QAGAAGAAGAAAAEGAAQGGAQ. The interval 613-637 is disordered; sequence QAGAAGAAGAAAAEGAAQGGAQTAD.

The protein belongs to the heat shock protein 70 family.

Its function is as follows. Acts as a chaperone. The protein is Chaperone protein DnaK of Burkholderia thailandensis (strain ATCC 700388 / DSM 13276 / CCUG 48851 / CIP 106301 / E264).